A 132-amino-acid polypeptide reads, in one-letter code: Small ribosomal subunit protein uS8 (132 aa).

Belongs to the universal ribosomal protein uS8 family. In terms of assembly, part of the 30S ribosomal subunit. Contacts proteins S5 and S12.

Its function is as follows. One of the primary rRNA binding proteins, it binds directly to 16S rRNA central domain where it helps coordinate assembly of the platform of the 30S subunit. This Streptococcus suis (strain 98HAH33) protein is Small ribosomal subunit protein uS8.